The primary structure comprises 192 residues: UPF0301 protein Jann_3896 (192 aa).

This sequence belongs to the UPF0301 (AlgH) family.

The sequence is that of UPF0301 protein Jann_3896 from Jannaschia sp. (strain CCS1).